We begin with the raw amino-acid sequence, 102 residues long: DET1- and DDB1-associated protein 1 (102 aa).

The interval Asn-67 to Thr-102 is disordered.

The protein belongs to the DDA1 family. Component of numerous DCX (DDB1-CUL4-X-box) E3 ubiquitin-protein ligase complexes which consist of a core of DDB1, cullin-4 (CUL4A or CUL4B), DDA1 and RBX1.

The protein operates within protein modification; protein ubiquitination. In terms of biological role, functions as a component of numerous distinct DCX (DDB1-CUL4-X-box) E3 ubiquitin-protein ligase complexes which mediate the ubiquitination and subsequent proteasomal degradation of target proteins. In the DCX complexes, acts as a scaffolding subunit required to stabilize the complex. This is DET1- and DDB1-associated protein 1 from Gallus gallus (Chicken).